Consider the following 297-residue polypeptide: Homoserine kinase (297 aa).

ATP is bound at residue 84–94; the sequence is PPARGLGSSAT.

Belongs to the GHMP kinase family. Homoserine kinase subfamily.

The protein localises to the cytoplasm. It catalyses the reaction L-homoserine + ATP = O-phospho-L-homoserine + ADP + H(+). The protein operates within amino-acid biosynthesis; L-threonine biosynthesis; L-threonine from L-aspartate: step 4/5. Catalyzes the ATP-dependent phosphorylation of L-homoserine to L-homoserine phosphate. The polypeptide is Homoserine kinase (thrB) (Aquifex aeolicus (strain VF5)).